Consider the following 490-residue polypeptide: Ribosome biogenesis protein YTM1 (490 aa).

The tract at residues 1–22 is disordered; the sequence is MDGLEDGPLDASTATSQKPQRQ. The interval 23–104 is ubiquitin-like (UBL) domain; that stretch reads VRLKLTSRHE…ETTLDVEYVR (82 aa). WD repeat units follow at residues 116–168, 175–213, 224–263, 298–338, 340–379, 385–425, and 449–487; these read LHDD…IALS, GHTA…DGFS, GHKG…NPAA, SHTA…LVDT, TASH…TTVS, GHTN…TDKD, and GEGV…PNGG. The disordered stretch occupies residues 255–286; that stretch reads TRKSENPAAPESLLPSNTSRSSKRRKLNSSVS.

This sequence belongs to the WD repeat WDR12/YTM1 family. In terms of assembly, component of the NOP7 complex, composed of ERB1, NOP7 and YTM1. The complex is held together by ERB1, which interacts with NOP7 via its N-terminal domain and with YTM1 via a high-affinity interaction between the seven-bladed beta-propeller domains of the 2 proteins. The NOP7 complex associates with the 66S pre-ribosome. Interacts (via UBL domain) with MDN1 (via VWFA/MIDAS domain).

Its subcellular location is the nucleus. The protein resides in the nucleolus. It localises to the nucleoplasm. In terms of biological role, component of the NOP7 complex, which is required for maturation of the 25S and 5.8S ribosomal RNAs and formation of the 60S ribosome. This Ajellomyces capsulatus (strain NAm1 / WU24) (Darling's disease fungus) protein is Ribosome biogenesis protein YTM1.